Reading from the N-terminus, the 1006-residue chain is Pentatricopeptide repeat-containing protein At1g30610, chloroplastic (1006 aa).

The N-terminal 40 residues, 1 to 40 (MAVTISTNAFVNASLLDESRNSFWRPLFHQPYYNCRRVVR), are a transit peptide targeting the chloroplast. 2 disordered regions span residues 180–219 (LSKS…ERGS) and 248–292 (SSVA…IARG). The segment covering 194-219 (ESFRKRYSKQEYHRSSDTSRGIERGS) has biased composition (basic and acidic residues). The segment covering 254–263 (WSNSGESSVT) has biased composition (polar residues). The span at 265-284 (PKDESFRRRYSKQEHHRSSD) shows a compositional bias: basic and acidic residues. PPR repeat units follow at residues 468–502 (TDYT…DRYK), 506–536 (IRII…MLLQ), 542–572 (DMVA…MRSP), 592–626 (DVVV…GQKP), 627–657 (SPVT…MQKS), 661–695 (NALA…GIVG), 759–789 (LVVT…MKKV), 793–827 (NLVT…GNHI), 840–874 (DTYT…GYHF), and 875–909 (NAKR…NRIP).

Belongs to the PPR family. P subfamily.

Its subcellular location is the plastid. The protein resides in the chloroplast. Functionally, may play a role in embryogenesis. This Arabidopsis thaliana (Mouse-ear cress) protein is Pentatricopeptide repeat-containing protein At1g30610, chloroplastic (EMB2279).